Here is a 261-residue protein sequence, read N- to C-terminus: SLA class II histocompatibility antigen, DQ haplotype C beta chain (261 aa).

An N-terminal signal peptide occupies residues 1–31; it reads MSGMVALRLPRGLWTAALTVMLVVLGAPVAE. Residues 32-126 form a beta-1 region; sequence GRDSPQDFVF…IEEGTTLQRR (95 aa). Residues 32–230 are Extracellular-facing; the sequence is GRDSPQDFVF…RAQSESAQSK (199 aa). 2 disulfides stabilise this stretch: cysteine 47–cysteine 111 and cysteine 149–cysteine 205. Residue asparagine 51 is glycosylated (N-linked (GlcNAc...) asparagine). The interval 127-220 is beta-2; sequence VQPTVTISPS…SLQNPILVEW (94 aa). An Ig-like C1-type domain is found at 129–233; it reads PTVTISPSKA…SESAQSKMLS (105 aa). A connecting peptide region spans residues 221-230; sequence RAQSESAQSK. A helical membrane pass occupies residues 231 to 251; the sequence is MLSGVGGFVLGLIFLGLGLFI. Residues 252–261 lie on the Cytoplasmic side of the membrane; the sequence is RHRSQKGLVR.

The protein belongs to the MHC class II family.

It is found in the membrane. The polypeptide is SLA class II histocompatibility antigen, DQ haplotype C beta chain (Sus scrofa (Pig)).